The chain runs to 220 residues: Glycerol-3-phosphate acyltransferase (220 aa).

The next 5 membrane-spanning stretches (helical) occupy residues 4 to 24 (LTILMIILAYLGGSLSSAVLV), 53 to 73 (VAALVVLLLDVLKGTAPVYLA), 80 to 100 (PVYLGFIGVAACLGHMYPIFF), 116 to 136 (MPIGFTMGGAVIGTWLVVLLV), and 138 to 158 (GYSSLASIITVLLSPLFTYLI). Residues 193 to 220 (WGRQAQRRQEEVGEMDDVAQKRDERDKK) form a disordered region. A compositionally biased stretch (basic and acidic residues) spans 210 to 220 (VAQKRDERDKK).

The protein belongs to the PlsY family. In terms of assembly, probably interacts with PlsX.

It is found in the cell inner membrane. It carries out the reaction an acyl phosphate + sn-glycerol 3-phosphate = a 1-acyl-sn-glycero-3-phosphate + phosphate. The protein operates within lipid metabolism; phospholipid metabolism. Its function is as follows. Catalyzes the transfer of an acyl group from acyl-phosphate (acyl-PO(4)) to glycerol-3-phosphate (G3P) to form lysophosphatidic acid (LPA). This enzyme utilizes acyl-phosphate as fatty acyl donor, but not acyl-CoA or acyl-ACP. This is Glycerol-3-phosphate acyltransferase from Aeromonas salmonicida (strain A449).